Consider the following 1241-residue polypeptide: ATP-dependent helicase/nuclease subunit A (1241 aa).

Positions 12–485 (SQWTDDQWKA…IDLAKNFRSR (474 aa)) constitute a UvrD-like helicase ATP-binding domain. 33–40 (AAAGSGKT) contacts ATP. The UvrD-like helicase C-terminal domain occupies 505 to 805 (GEIDYDADAE…RIMTIHKSKG (301 aa)).

Belongs to the helicase family. AddA subfamily. As to quaternary structure, heterodimer of AddA and AddB/RexB. Requires Mg(2+) as cofactor.

The catalysed reaction is Couples ATP hydrolysis with the unwinding of duplex DNA by translocating in the 3'-5' direction.. It catalyses the reaction ATP + H2O = ADP + phosphate + H(+). Its function is as follows. The heterodimer acts as both an ATP-dependent DNA helicase and an ATP-dependent, dual-direction single-stranded exonuclease. Recognizes the chi site generating a DNA molecule suitable for the initiation of homologous recombination. The AddA nuclease domain is required for chi fragment generation; this subunit has the helicase and 3' -&gt; 5' nuclease activities. This chain is ATP-dependent helicase/nuclease subunit A, found in Bacillus cereus (strain ATCC 14579 / DSM 31 / CCUG 7414 / JCM 2152 / NBRC 15305 / NCIMB 9373 / NCTC 2599 / NRRL B-3711).